Consider the following 81-residue polypeptide: Cytotoxin 3d (81 aa).

Residues 1 to 21 (MKTLLLTLVVVTIVCLDLGYT) form the signal peptide. Cystine bridges form between Cys-24/Cys-42, Cys-35/Cys-59, Cys-63/Cys-74, and Cys-75/Cys-80.

It belongs to the three-finger toxin family. Short-chain subfamily. Type IA cytotoxin sub-subfamily. In terms of assembly, monomer in solution; Homodimer and oligomer in the presence of negatively charged lipids forming a pore with a size ranging between 20 and 30 Angstroms. In terms of tissue distribution, expressed by the venom gland.

Its subcellular location is the secreted. The protein localises to the target cell membrane. In terms of biological role, shows cytolytic activity on many different cells by forming pore in lipid membranes. In vivo, increases heart rate or kills the animal by cardiac arrest. In addition, it binds to heparin with high affinity, interacts with Kv channel-interacting protein 1 (KCNIP1) in a calcium-independent manner, and binds to integrin alpha-V/beta-3 (ITGAV/ITGB3) with moderate affinity. The polypeptide is Cytotoxin 3d (Naja atra (Chinese cobra)).